A 401-amino-acid chain; its full sequence is Pyruvyl transferase 1 (401 aa).

Positions 1–30 are cleaved as a signal peptide; that stretch reads MFANINIRKSVWLFLLAAVSCTLFIYGVTR. Residues 38–64 form a disordered region; that stretch reads NPSSLTSPSSSTSVDKKKPLFTKSPRN. Over residues 39–50 the composition is skewed to low complexity; sequence PSSLTSPSSSTS.

Belongs to the polysaccharide pyruvyl transferase family.

In terms of biological role, involved in cell wall biogenesis. Has a role in the addition of Gal-beta1,3 moieties to galactomannans and their subsequent pyruvylation. The polypeptide is Pyruvyl transferase 1 (pvg1) (Schizosaccharomyces pombe (strain 972 / ATCC 24843) (Fission yeast)).